Consider the following 410-residue polypeptide: Lissencephaly-1 homolog (410 aa).

Residues 7–39 form the LisH domain; sequence QRDELNRAIADYLRSNGYEEAYSTFKKEAELDN. Positions 32-82 form a coiled coil; sequence KKEAELDNNEELDKKYAGLLEKKWTSVIRLQKKVMELESKLNEAKEEITLG. WD repeat units follow at residues 106-147, 148-189, 190-229, 232-271, 274-333, 336-375, and 378-410; these read GHRS…RTLK, GHTD…RTMH, GHDHNVSSVAIMPNGDHIISASRDKTMKMWEVATGYCVKT, GHREWVRMVRPNQDGTLIASCSNDQTVRVWVVASKECKAE, EHEH…CLMT, GHDNWVRGVLFHPGGKFIVTCADDKTLRIWDYKNKRCMKT, and AHEHFVTSLDFHKAAPYVVTGSVDQTVKVWECR.

It belongs to the WD repeat LIS1/nudF family. Can self-associate. Component of the cytosolic PAF-AH (I) heterotetrameric enzyme, which is composed of PAFAH1B1 (beta), PAFAH1B2 (alpha2) and PAFAH1B3 (alpha1) subunits. The catalytic activity of the enzyme resides in the alpha1 (PAFAH1B3) and alpha2 (PAFAH1B2) subunits, whereas the beta subunit (PAFAH1B1) has regulatory activity. Trimer formation is not essential for the catalytic activity. Interacts with dynein, dynactin, nde1 and ndel1.

Its subcellular location is the cytoplasm. The protein localises to the cytoskeleton. The protein resides in the microtubule organizing center. It localises to the centrosome. Regulatory subunit (beta subunit) of the cytosolic type I platelet-activating factor (PAF) acetylhydrolase (PAF-AH (I)), an enzyme that catalyzes the hydrolyze of the acetyl group at the sn-2 position of PAF and its analogs and participates in the PAF inactivation. Positively regulates the activity of the minus-end directed microtubule motor protein dynein. May enhance dynein-mediated microtubule sliding by targeting dynein to the microtubule plus end. Required for several dynein- and microtubule-dependent processes such as the maintenance of Golgi integrity, the peripheral transport of microtubule fragments and the coupling of the nucleus and centrosome. May be required for proliferation of neuronal precursors and neuronal migration. The sequence is that of Lissencephaly-1 homolog (pafah1b1) from Tetraodon nigroviridis (Spotted green pufferfish).